The chain runs to 253 residues: 5-oxoprolinase subunit A (253 aa).

This sequence belongs to the LamB/PxpA family. As to quaternary structure, forms a complex composed of PxpA, PxpB and PxpC.

The enzyme catalyses 5-oxo-L-proline + ATP + 2 H2O = L-glutamate + ADP + phosphate + H(+). Its function is as follows. Catalyzes the cleavage of 5-oxoproline to form L-glutamate coupled to the hydrolysis of ATP to ADP and inorganic phosphate. This Bacillus licheniformis (strain ATCC 14580 / DSM 13 / JCM 2505 / CCUG 7422 / NBRC 12200 / NCIMB 9375 / NCTC 10341 / NRRL NRS-1264 / Gibson 46) protein is 5-oxoprolinase subunit A.